The following is a 421-amino-acid chain: Medium-chain specific acyl-CoA dehydrogenase, mitochondrial (421 aa).

The N-terminal 25 residues, 1 to 25 (MAAALRRGYKVLRSVSHFECRAQHT), are a transit peptide targeting the mitochondrion. Lys-69 carries the post-translational modification N6-acetyllysine; alternate. Lys-69 carries the N6-succinyllysine; alternate modification. An N6-acetyllysine modification is found at Lys-79. Position 158-167 (158-167 (YCVTEPSAGS)) interacts with FAD. Ser-167 is a binding site for octanoyl-CoA. Lys-179 is subject to N6-succinyllysine. FAD is bound at residue 191 to 193 (WIT). Position 212 is an N6-acetyllysine; alternate (Lys-212). An N6-succinyllysine; alternate modification is found at Lys-212. Ser-216 serves as a coordination point for octanoyl-CoA. Residues Lys-217, Lys-259, and Lys-271 each carry the N6-acetyllysine; alternate modification. 3 positions are modified to N6-succinyllysine; alternate: Lys-217, Lys-259, and Lys-271. Asp-278 and Arg-281 together coordinate octanoyl-CoA. At Lys-301 the chain carries N6-acetyllysine. FAD contacts are provided by residues 306-308 (RKT) and 316-317 (HQ). Octanoyl-CoA is bound by residues Arg-349 and Thr-351. A Phosphothreonine modification is found at Thr-351. 374-378 (QIFGG) contributes to the FAD binding site. Glu-401 is a binding site for octanoyl-CoA. Glu-401 (proton acceptor) is an active-site residue. FAD is bound at residue 402–405 (GTAQ).

Belongs to the acyl-CoA dehydrogenase family. As to quaternary structure, homotetramer. Interacts with the heterodimeric electron transfer flavoprotein ETF. FAD serves as cofactor. Acetylated. Could occur at proximity of the cofactor-binding sites and reduce the catalytic activity. Could be deacetylated by SIRT3.

The protein resides in the mitochondrion matrix. It carries out the reaction a medium-chain 2,3-saturated fatty acyl-CoA + oxidized [electron-transfer flavoprotein] + H(+) = a medium-chain (2E)-enoyl-CoA + reduced [electron-transfer flavoprotein]. The enzyme catalyses pentanoyl-CoA + oxidized [electron-transfer flavoprotein] + H(+) = (2E)-pentenoyl-CoA + reduced [electron-transfer flavoprotein]. It catalyses the reaction hexanoyl-CoA + oxidized [electron-transfer flavoprotein] + H(+) = (2E)-hexenoyl-CoA + reduced [electron-transfer flavoprotein]. The catalysed reaction is octanoyl-CoA + oxidized [electron-transfer flavoprotein] + H(+) = (2E)-octenoyl-CoA + reduced [electron-transfer flavoprotein]. It carries out the reaction decanoyl-CoA + oxidized [electron-transfer flavoprotein] + H(+) = (2E)-decenoyl-CoA + reduced [electron-transfer flavoprotein]. The enzyme catalyses dodecanoyl-CoA + oxidized [electron-transfer flavoprotein] + H(+) = (2E)-dodecenoyl-CoA + reduced [electron-transfer flavoprotein]. It catalyses the reaction tetradecanoyl-CoA + oxidized [electron-transfer flavoprotein] + H(+) = (2E)-tetradecenoyl-CoA + reduced [electron-transfer flavoprotein]. The catalysed reaction is oxidized [electron-transfer flavoprotein] + hexadecanoyl-CoA + H(+) = (2E)-hexadecenoyl-CoA + reduced [electron-transfer flavoprotein]. It participates in lipid metabolism; mitochondrial fatty acid beta-oxidation. Its function is as follows. Medium-chain specific acyl-CoA dehydrogenase is one of the acyl-CoA dehydrogenases that catalyze the first step of mitochondrial fatty acid beta-oxidation, an aerobic process breaking down fatty acids into acetyl-CoA and allowing the production of energy from fats. The first step of fatty acid beta-oxidation consists in the removal of one hydrogen from C-2 and C-3 of the straight-chain fatty acyl-CoA thioester, resulting in the formation of trans-2-enoyl-CoA. Electron transfer flavoprotein (ETF) is the electron acceptor that transfers electrons to the main mitochondrial respiratory chain via ETF-ubiquinone oxidoreductase (ETF dehydrogenase). Among the different mitochondrial acyl-CoA dehydrogenases, medium-chain specific acyl-CoA dehydrogenase acts specifically on acyl-CoAs with saturated 6 to 12 carbons long primary chains. This Rattus norvegicus (Rat) protein is Medium-chain specific acyl-CoA dehydrogenase, mitochondrial.